A 526-amino-acid polypeptide reads, in one-letter code: Tyrosine-protein kinase transforming protein Src (526 aa).

Positions 1–57 (MGSSKSKPKDPSQRRRSLEPPDSTHHGGFPASQTPNKTAAPDTHRTPSRSFGTVATE) are disordered. Residue glycine 2 is the site of N-myristoyl glycine; by host attachment. Residues 7-25 (KPKDPSQRRRSLEPPDSTH) show a composition bias toward basic and acidic residues. The region spanning 81–142 (GGVTTFVALY…PSNYVAPSDS (62 aa)) is the SH3 domain. One can recognise an SH2 domain in the interval 148 to 245 (WYFGKITRRE…GLCHRLTNVC (98 aa)). Residues 267 to 517 (LRLEVKLGQG…TFEYLQAQLL (251 aa)) enclose the Protein kinase domain. Residues 273-281 (LGQGCFGEV) and lysine 295 each bind ATP. Aspartate 386 (proton acceptor) is an active-site residue. Tyrosine 416 is subject to Phosphotyrosine; by autocatalysis.

This sequence belongs to the protein kinase superfamily. Tyr protein kinase family. SRC subfamily. Homodimer. Post-translationally, the phosphorylated form is termed pp60v-src.

The catalysed reaction is L-tyrosyl-[protein] + ATP = O-phospho-L-tyrosyl-[protein] + ADP + H(+). Its function is as follows. This phosphoprotein, required for both the initiation and the maintenance of neoplastic transformation, is a protein kinase that catalyzes the phosphorylation of tyrosine residues in vitro. Causes mitotic slippage in addition to cytokinesis failure in the host cell. Phosphorylates and attenuates the activity of host CDK1, possibly causing the mitotic slippage. The sequence is that of Tyrosine-protein kinase transforming protein Src (V-SRC) from Rous sarcoma virus subgroup A (strain Schmidt-Ruppin) (RSV-SR-A).